A 497-amino-acid chain; its full sequence is Probable cytosol aminopeptidase (497 aa).

2 residues coordinate Mn(2+): Lys-267 and Asp-272. Lys-279 is an active-site residue. 3 residues coordinate Mn(2+): Asp-290, Asp-349, and Glu-351. Arg-353 is a catalytic residue.

Belongs to the peptidase M17 family. Requires Mn(2+) as cofactor.

The protein resides in the cytoplasm. It catalyses the reaction Release of an N-terminal amino acid, Xaa-|-Yaa-, in which Xaa is preferably Leu, but may be other amino acids including Pro although not Arg or Lys, and Yaa may be Pro. Amino acid amides and methyl esters are also readily hydrolyzed, but rates on arylamides are exceedingly low.. The catalysed reaction is Release of an N-terminal amino acid, preferentially leucine, but not glutamic or aspartic acids.. Its function is as follows. Presumably involved in the processing and regular turnover of intracellular proteins. Catalyzes the removal of unsubstituted N-terminal amino acids from various peptides. This chain is Probable cytosol aminopeptidase, found in Pseudomonas entomophila (strain L48).